We begin with the raw amino-acid sequence, 396 residues long: Elongation factor Tu (396 aa).

The 197-residue stretch at K10–E206 folds into the tr-type G domain. The segment at G19–T26 is G1. G19–T26 contributes to the GTP binding site. A Mg(2+)-binding site is contributed by T26. The tract at residues G60–N64 is G2. The G3 stretch occupies residues D81–G84. GTP contacts are provided by residues D81 to H85 and N136 to D139. The G4 stretch occupies residues N136 to D139. The interval S174–K176 is G5.

It belongs to the TRAFAC class translation factor GTPase superfamily. Classic translation factor GTPase family. EF-Tu/EF-1A subfamily. As to quaternary structure, monomer.

It is found in the cytoplasm. It catalyses the reaction GTP + H2O = GDP + phosphate + H(+). Functionally, GTP hydrolase that promotes the GTP-dependent binding of aminoacyl-tRNA to the A-site of ribosomes during protein biosynthesis. This is Elongation factor Tu from Methylibium petroleiphilum (strain ATCC BAA-1232 / LMG 22953 / PM1).